A 305-amino-acid chain; its full sequence is Energy-coupling factor transporter ATP-binding protein EcfA2 (305 aa).

Residues 13–262 form the ABC transporter domain; it reads LQNVDITFTN…KNLLQELLIE (250 aa). 55-62 lines the ATP pocket; sequence GSTGSGKS.

The protein belongs to the ABC transporter superfamily. Energy-coupling factor EcfA family. Forms a stable energy-coupling factor (ECF) transporter complex composed of 2 membrane-embedded substrate-binding proteins (S component), 2 ATP-binding proteins (A component) and 2 transmembrane proteins (T component).

The protein localises to the cell membrane. Its function is as follows. ATP-binding (A) component of a common energy-coupling factor (ECF) ABC-transporter complex. Unlike classic ABC transporters this ECF transporter provides the energy necessary to transport a number of different substrates. In Spiroplasma kunkelii, this protein is Energy-coupling factor transporter ATP-binding protein EcfA2.